The sequence spans 177 residues: Ubiquinol-cytochrome c reductase iron-sulfur subunit (177 aa).

A helical membrane pass occupies residues 18–38 (MVLTASSVAAVGAVCTLWPLV). The region spanning 88 to 175 (ARAVKMSELI…YTFISDKKIR (88 aa)) is the Rieske domain. Residues Cys-120, His-122, Cys-139, and His-142 each contribute to the [2Fe-2S] cluster site. A disulfide bridge connects residues Cys-125 and Cys-141.

It belongs to the Rieske iron-sulfur protein family. In terms of assembly, the main subunits of complex b-c1 are: cytochrome b, cytochrome c1 and the Rieske protein. [2Fe-2S] cluster is required as a cofactor.

It localises to the cell membrane. The catalysed reaction is a quinol + 2 Fe(III)-[cytochrome c](out) = a quinone + 2 Fe(II)-[cytochrome c](out) + 2 H(+)(out). Component of the ubiquinol-cytochrome c reductase complex (complex III or cytochrome b-c1 complex), which is a respiratory chain that generates an electrochemical potential coupled to ATP synthesis. The sequence is that of Ubiquinol-cytochrome c reductase iron-sulfur subunit (petA) from Rickettsia felis (strain ATCC VR-1525 / URRWXCal2) (Rickettsia azadi).